Here is a 126-residue protein sequence, read N- to C-terminus: Profilin (126 aa).

This sequence belongs to the profilin family. As to quaternary structure, occurs in many kinds of cells as a complex with monomeric actin in a 1:1 ratio.

Its subcellular location is the cytoplasm. It localises to the cytoskeleton. Its function is as follows. Binds to actin and affects the structure of the cytoskeleton. At high concentrations, profilin prevents the polymerization of actin, whereas it enhances it at low concentrations. By binding to PIP2, it inhibits the formation of IP3 and DG. In Saccharomyces cerevisiae (strain ATCC 204508 / S288c) (Baker's yeast), this protein is Profilin (PFY1).